We begin with the raw amino-acid sequence, 1861 residues long: Golgi-specific brefeldin A-resistance guanine nucleotide exchange factor 1 (1861 aa).

The interval 1–211 is DCB; DCB:DCB domain and DCB:HUS domain interaction; it reads MVDKNIYIIQ…EPKSYVGTNM (211 aa). Residues 1-380 form an interaction with RAB1B region; it reads MVDKNIYIIQ…SVHDMDYVNP (380 aa). Disordered regions lie at residues 210–264 and 289–353; these read NMKK…LTGG and CTDS…VESI. The span at 227–241 shows a compositional bias: basic residues; sequence WKKQKRSPRPPRHTT. The span at 253-262 shows a compositional bias: polar residues; that stretch reads NGATLPSNLT. Phosphoserine occurs at positions 349 and 352. A Phosphothreonine modification is found at T507. The interval 530 to 550 is HUS; DCB:HUS domain interaction; sequence RIPSFVTELYINYDCDYYCSN. Residues 603 to 634 form a disordered region; that stretch reads QEKKETARPGFEAVDGNPETNKSERATSDGKS. Residues 692–882 enclose the SEC7 domain; sequence ELIEIKNKKK…EDMYHAIKNE (191 aa). Positions 886-1372 are phosphatidylinositol-phosphate binding; required for translocation to the leading edge and for ARF1 activation upon GPCR signaling; sequence MPEEQTGLVR…LSRPGPSPLV (487 aa). The segment covering 1286-1296 has biased composition (low complexity); sequence TARADAPDAGA. The disordered stretch occupies residues 1286–1335; the sequence is TARADAPDAGAQSDSELPSYHQNDVSLDRGYTSDSEVYTDHGRPGKIHRS. Polar residues predominate over residues 1297-1310; the sequence is QSDSELPSYHQNDV. The residue at position 1298 (S1298) is a Phosphoserine. Y1316 carries the phosphotyrosine modification. A phosphoserine mark is found at S1318, S1320, and S1335. T1337 bears the Phosphothreonine mark. 2 disordered regions span residues 1431–1486 and 1727–1812; these read GCKS…EGVP and PMPA…PLIL. Positions 1434 to 1448 are enriched in basic and acidic residues; it reads SQDKRSKSHKYDSKG. A phosphoserine mark is found at S1477, S1775, and S1786. Over residues 1776 to 1793 the composition is skewed to low complexity; sequence TRAPSSSSPGSPMASSPS.

As to quaternary structure, can form homodimers and probably homotetramers. Interacts with COPG1; the interaction is independent on ARF1 activation. Interacts with ARF1, ARF3, ARF4 and ARF5. Interacts with RAB1B (GTP-bound form); required for GBF1 membrane association. Interacts with GGA1, GGA2 and GGA3. Interacts with USO1. Interacts (via SEC7 domain) with PNPLA2 (via C-terminus); the interaction is direct. Interacts with ARMH3.

The protein resides in the golgi apparatus. It localises to the cis-Golgi network. Its subcellular location is the endoplasmic reticulum-Golgi intermediate compartment. The protein localises to the trans-Golgi network. It is found in the cytoplasm. The protein resides in the lipid droplet. It localises to the membrane. In terms of biological role, guanine-nucleotide exchange factor (GEF) for members of the Arf family of small GTPases involved in trafficking in the early secretory pathway; its GEF activity initiates the coating of nascent vesicles via the localized generation of activated ARFs through replacement of GDP with GTP. Recruitment to cis-Golgi membranes requires membrane association of Arf-GDP and can be regulated by ARF1, ARF3, ARF4 and ARF5. Involved in the recruitment of the COPI coat complex to the endoplasmic reticulum exit sites (ERES), and the endoplasmic reticulum-Golgi intermediate (ERGIC) and cis-Golgi compartments which implicates ARF1 activation. Involved in COPI vesicle-dependent retrograde transport from the ERGIC and cis-Golgi compartments to the endoplasmic reticulum (ER). Involved in the trans-Golgi network recruitment of GGA1, GGA2, GGA3, BIG1, BIG2, and the AP-1 adaptor protein complex related to chlathrin-dependent transport; the function requires its GEF activity (probably at least in part on ARF4 and ARF5). Has GEF activity towards ARF1. Has in vitro GEF activity towards ARF5. Involved in the processing of PSAP. Required for the assembly of the Golgi apparatus. The AMPK-phosphorylated form is involved in Golgi disassembly during mitotis and under stress conditions. May be involved in the COPI vesicle-dependent recruitment of PNPLA2 to lipid droplets; however, this function is under debate. In neutrophils, involved in G protein-coupled receptor (GPCR)-mediated chemotaxis und superoxide production. Proposed to be recruited by phosphatidylinositol-phosphates generated upon GPCR stimulation to the leading edge where it recruits and activates ARF1, and is involved in recruitment of GIT2 and the NADPH oxidase complex. Plays a role in maintaining mitochondrial morphology. The polypeptide is Golgi-specific brefeldin A-resistance guanine nucleotide exchange factor 1 (Mus musculus (Mouse)).